We begin with the raw amino-acid sequence, 267 residues long: Tryptophan synthase alpha chain (267 aa).

Catalysis depends on proton acceptor residues glutamate 47 and aspartate 58.

It belongs to the TrpA family. In terms of assembly, tetramer of two alpha and two beta chains.

It carries out the reaction (1S,2R)-1-C-(indol-3-yl)glycerol 3-phosphate + L-serine = D-glyceraldehyde 3-phosphate + L-tryptophan + H2O. It functions in the pathway amino-acid biosynthesis; L-tryptophan biosynthesis; L-tryptophan from chorismate: step 5/5. Its function is as follows. The alpha subunit is responsible for the aldol cleavage of indoleglycerol phosphate to indole and glyceraldehyde 3-phosphate. The sequence is that of Tryptophan synthase alpha chain from Chlorobium chlorochromatii (strain CaD3).